The chain runs to 415 residues: MIKVSDLVIPTINDLELQNKKVLLRIDVNSPVDKNTGKLLDDSRIKAHSITIKELLKKGNSIVLISHQGRPGDDDFISLKEHSLLLSKYVGTEIEFVEDIIGPYAVEKIKKLDNKGVIMLENIRLMSEELIEAPPQQHAKSFLIKKLSPLFDAYVNDSFSAAHRSQPSLVGFPLVLPSAAGIVMEKEVSALSKIFNYEDSPKIFVLGGGKVNDTLKIIENLIKNRVADRILTGGLVAELFAVAKGINLGKKNMQVLENKGLLSLVPRARKMLLSGAPIEIPVDFVTEQENSQTLEEPTSNLKGTIKDIGNTTIEMYSSFIKESKVVVLRGPMGVIEDERFRRGSKALLTSAVEGPGYVIIGGGHMISMIDKNIQINENKVHVSTGGGALLLFLAGEKLPVLESLHLSWVVRSGKS.

Substrate-binding positions include 27 to 29, arginine 44, 67 to 70, arginine 124, and arginine 164; these read DVN and HQGR. Residues glutamate 336 and 362 to 365 each bind ATP; that span reads GGHM.

The protein belongs to the phosphoglycerate kinase family. In terms of assembly, monomer.

It is found in the cytoplasm. It catalyses the reaction (2R)-3-phosphoglycerate + ATP = (2R)-3-phospho-glyceroyl phosphate + ADP. It functions in the pathway carbohydrate degradation; glycolysis; pyruvate from D-glyceraldehyde 3-phosphate: step 2/5. In Sulfolobus acidocaldarius (strain ATCC 33909 / DSM 639 / JCM 8929 / NBRC 15157 / NCIMB 11770), this protein is Phosphoglycerate kinase.